A 192-amino-acid polypeptide reads, in one-letter code: E3 ubiquitin-protein ligase RNF185 (192 aa).

The segment covering 1-14 has biased composition (polar residues); it reads MASKGPSASASTEN. Positions 1 to 30 are disordered; the sequence is MASKGPSASASTENSSAGGPSGSSNGTGES. The Cytoplasmic segment spans residues 1–130; that stretch reads MASKGPSASA…GGFQGFGFGD (130 aa). The segment covering 15-27 has biased composition (low complexity); the sequence is SSAGGPSGSSNGT. A required for ubiquitin ligase activity and protection against ER stress-induced cell death region spans residues 29 to 80; the sequence is ESGGQDSTFECNICLDTAKDAVISLCGHLFCWPCLHQWLETRPNRQVCPVCK. The RING-type zinc-finger motif lies at 39–80; it reads CNICLDTAKDAVISLCGHLFCWPCLHQWLETRPNRQVCPVCK. The interval 90–123 is disordered; the sequence is PLYGRGSTGQQDPREKTPPRPQGQRPEPENRGGF. A helical membrane pass occupies residues 131–151; it reads GGFQMSFGIGAFPFGIFATAF. Over 152 to 171 the chain is Mitochondrial intermembrane; the sequence is NINDGRPPPAVPGTPQYVDE. A helical membrane pass occupies residues 172 to 192; it reads QFLSRLFLFVALVIMFWLLIA.

As to quaternary structure, interacts with ATG5 and BNIP1.

It is found in the mitochondrion outer membrane. The protein localises to the endoplasmic reticulum membrane. It catalyses the reaction S-ubiquitinyl-[E2 ubiquitin-conjugating enzyme]-L-cysteine + [acceptor protein]-L-lysine = [E2 ubiquitin-conjugating enzyme]-L-cysteine + N(6)-ubiquitinyl-[acceptor protein]-L-lysine.. The protein operates within protein modification; protein ubiquitination. Its function is as follows. E3 ubiquitin-protein ligase that regulates selective mitochondrial autophagy by mediating 'Lys-63'-linked polyubiquitination of BNIP1. Acts in the endoplasmic reticulum (ER)-associated degradation (ERAD) pathway, which targets misfolded proteins that accumulate in the endoplasmic reticulum (ER) for ubiquitination and subsequent proteasome-mediated degradation. Protects cells from ER stress-induced apoptosis. Responsible for the cotranslational ubiquitination and degradation of CFTR in the ERAD pathway. Also acts as a regulator of the innate antiviral response by catalyzing 'Lys-27'-linked polyubiquitination of CGAS, thereby promoting CGAS cyclic GMP-AMP synthase activity. Preferentially associates with the E2 enzymes UBE2J1 and UBE2J2. The protein is E3 ubiquitin-protein ligase RNF185 (Rnf185) of Rattus norvegicus (Rat).